A 199-amino-acid chain; its full sequence is MNKFIVFEGIDGCGKTTQAKLIAEKLNAKFTFEPTDGKIGKSIREILSGSKCQKETLALLFAADRVEHVSKIEEDLKKSHVVSDRYVYSSIVYQMSQGIPKDFIYTINDYAKTPDLVVLLDVDLNEALKRMESREKEIFEKIEIQKKIKEGYYSLINSENEKFMPKYGFIIIDTTSKSITQVFDEILNAIIDKIPDIIQ.

Residue 9–16 (GIDGCGKT) coordinates ATP.

It belongs to the thymidylate kinase family.

The catalysed reaction is dTMP + ATP = dTDP + ADP. The protein is Probable thymidylate kinase of Methanococcus maripaludis (strain C7 / ATCC BAA-1331).